We begin with the raw amino-acid sequence, 365 residues long: Isopentenyl-diphosphate delta-isomerase (365 aa).

4–5 (RK) lines the substrate pocket. FMN contacts are provided by residues 62 to 64 (GMT), serine 92, and asparagine 121. 92–94 (SQR) provides a ligand contact to substrate. Residue glutamine 155 coordinates substrate. Glutamate 156 lines the Mg(2+) pocket. FMN contacts are provided by residues lysine 187, threonine 216, 267-269 (GVR), and 288-289 (AL).

It belongs to the IPP isomerase type 2 family. In terms of assembly, homooctamer. Dimer of tetramers. Requires FMN as cofactor. The cofactor is NADPH. Mg(2+) serves as cofactor.

Its subcellular location is the cytoplasm. It catalyses the reaction isopentenyl diphosphate = dimethylallyl diphosphate. Its function is as follows. Involved in the biosynthesis of isoprenoids. Catalyzes the 1,3-allylic rearrangement of the homoallylic substrate isopentenyl (IPP) to its allylic isomer, dimethylallyl diphosphate (DMAPP). The polypeptide is Isopentenyl-diphosphate delta-isomerase (Methanopyrus kandleri (strain AV19 / DSM 6324 / JCM 9639 / NBRC 100938)).